The following is a 130-amino-acid chain: Small ribosomal subunit protein uS9 (130 aa).

This sequence belongs to the universal ribosomal protein uS9 family.

The chain is Small ribosomal subunit protein uS9 from Oceanobacillus iheyensis (strain DSM 14371 / CIP 107618 / JCM 11309 / KCTC 3954 / HTE831).